Consider the following 241-residue polypeptide: Core protein D3 homolog (241 aa).

It belongs to the chordopoxvirinae D3 family.

The protein resides in the virion. In terms of biological role, late protein which is part of a large complex required for early virion morphogenesis. This complex participates in the formation of virosomes and the incorporation of virosomal contents into nascent immature virions. This is Core protein D3 homolog from Oryctolagus cuniculus (Rabbit).